Reading from the N-terminus, the 367-residue chain is Alginate lyase (367 aa).

Residues 1-27 (MKTSHLIRITLPGALAAALLASQVSQA) form the signal peptide. Residues 65-66 (SK), 138-139 (HT), and Tyr-256 contribute to the substrate site.

This sequence belongs to the polysaccharide lyase 5 family.

It localises to the periplasm. It catalyses the reaction Eliminative cleavage of alginate to give oligosaccharides with 4-deoxy-alpha-L-erythro-hex-4-enuronosyl groups at their non-reducing ends and beta-D-mannuronate at their reducing end.. Its function is as follows. Catalyzes the depolymerization of alginate by cleaving the beta-1,4 glycosidic bond between two adjacent sugar residues via a beta-elimination mechanism. May serve to degrade mislocalized alginate that is trapped in the periplasmic space. This Pseudomonas paraeruginosa (strain DSM 24068 / PA7) (Pseudomonas aeruginosa (strain PA7)) protein is Alginate lyase.